The chain runs to 87 residues: Large ribosomal subunit protein bL31B (87 aa).

The protein belongs to the bacterial ribosomal protein bL31 family. Type B subfamily. Part of the 50S ribosomal subunit.

This chain is Large ribosomal subunit protein bL31B, found in Burkholderia multivorans (strain ATCC 17616 / 249).